The chain runs to 353 residues: UPF0283 membrane protein YcjF (353 aa).

Residues 1-19 show a composition bias toward basic and acidic residues; that stretch reads MSEPLKPRIDFAEPLKEEP. A disordered region spans residues 1 to 35; that stretch reads MSEPLKPRIDFAEPLKEEPTSAFKAQQTFSEAESR. Helical transmembrane passes span 70–90, 100–120, and 213–233; these read MVMGGLALFGASVVGQGVQWT, VALGGCAAGALIIGAGVGSVV, and ESTLMIAVSSLALVDMAFIAW.

The protein belongs to the UPF0283 family.

It localises to the cell inner membrane. In Salmonella gallinarum (strain 287/91 / NCTC 13346), this protein is UPF0283 membrane protein YcjF.